The following is a 400-amino-acid chain: Argininosuccinate synthase (400 aa).

Residue 8 to 16 (AYSGGLDTS) coordinates ATP. Tyr-85 contributes to the L-citrulline binding site. ATP is bound at residue Gly-115. Residues Thr-117, Asn-121, and Asp-122 each contribute to the L-aspartate site. Asn-121 serves as a coordination point for L-citrulline. 4 residues coordinate L-citrulline: Arg-125, Ser-173, Glu-258, and Tyr-270.

This sequence belongs to the argininosuccinate synthase family. Type 1 subfamily. Homotetramer.

The protein resides in the cytoplasm. It carries out the reaction L-citrulline + L-aspartate + ATP = 2-(N(omega)-L-arginino)succinate + AMP + diphosphate + H(+). Its pathway is amino-acid biosynthesis; L-arginine biosynthesis; L-arginine from L-ornithine and carbamoyl phosphate: step 2/3. The polypeptide is Argininosuccinate synthase (Staphylococcus haemolyticus (strain JCSC1435)).